Here is a 456-residue protein sequence, read N- to C-terminus: Bifunctional protein GlmU (456 aa).

The segment at 1–229 is pyrophosphorylase; the sequence is MLNNAMSVVI…LSEVEGVNNR (229 aa). UDP-N-acetyl-alpha-D-glucosamine contacts are provided by residues 11–14, Lys25, Gln76, 81–82, 103–105, Gly140, Glu154, Asn169, and Asn227; these read LAAG, GT, and YGD. Mg(2+) is bound at residue Asp105. Asn227 contributes to the Mg(2+) binding site. Residues 230-250 form a linker region; sequence LQLSRLERVYQSEQAEKLLLA. The N-acetyltransferase stretch occupies residues 251–456; it reads GVMLRDPARF…EGWRRPVKKK (206 aa). UDP-N-acetyl-alpha-D-glucosamine contacts are provided by Arg333 and Lys351. His363 serves as the catalytic Proton acceptor. 2 residues coordinate UDP-N-acetyl-alpha-D-glucosamine: Tyr366 and Asn377. Residues Ala380, 386-387, Ser405, Ala423, and Arg440 each bind acetyl-CoA; that span reads NY.

The protein in the N-terminal section; belongs to the N-acetylglucosamine-1-phosphate uridyltransferase family. This sequence in the C-terminal section; belongs to the transferase hexapeptide repeat family. In terms of assembly, homotrimer. Requires Mg(2+) as cofactor.

Its subcellular location is the cytoplasm. It catalyses the reaction alpha-D-glucosamine 1-phosphate + acetyl-CoA = N-acetyl-alpha-D-glucosamine 1-phosphate + CoA + H(+). The catalysed reaction is N-acetyl-alpha-D-glucosamine 1-phosphate + UTP + H(+) = UDP-N-acetyl-alpha-D-glucosamine + diphosphate. It functions in the pathway nucleotide-sugar biosynthesis; UDP-N-acetyl-alpha-D-glucosamine biosynthesis; N-acetyl-alpha-D-glucosamine 1-phosphate from alpha-D-glucosamine 6-phosphate (route II): step 2/2. Its pathway is nucleotide-sugar biosynthesis; UDP-N-acetyl-alpha-D-glucosamine biosynthesis; UDP-N-acetyl-alpha-D-glucosamine from N-acetyl-alpha-D-glucosamine 1-phosphate: step 1/1. The protein operates within bacterial outer membrane biogenesis; LPS lipid A biosynthesis. Functionally, catalyzes the last two sequential reactions in the de novo biosynthetic pathway for UDP-N-acetylglucosamine (UDP-GlcNAc). The C-terminal domain catalyzes the transfer of acetyl group from acetyl coenzyme A to glucosamine-1-phosphate (GlcN-1-P) to produce N-acetylglucosamine-1-phosphate (GlcNAc-1-P), which is converted into UDP-GlcNAc by the transfer of uridine 5-monophosphate (from uridine 5-triphosphate), a reaction catalyzed by the N-terminal domain. The sequence is that of Bifunctional protein GlmU from Escherichia coli O139:H28 (strain E24377A / ETEC).